The chain runs to 201 residues: MELIVKDAQSALTVSETTFGRDFNEALVHQVVVAYAAGARQGTRAQKTRAEVTGSGKKPWRQKGTGRARAGSVKSPIWRSGGVTFAAKPQDHSQKVNKKMYRGALKSILSELVRQDRLIIVEKFSVEAPKTKLLAQKLKDMALEDVLIITGELDENLFLAARNLYKVDVRDVAGIDPVSLIAFDKVVMTADAVKQVEEMLA.

The disordered stretch occupies residues 45 to 67; sequence AQKTRAEVTGSGKKPWRQKGTGR.

Belongs to the universal ribosomal protein uL4 family. Part of the 50S ribosomal subunit.

Its function is as follows. One of the primary rRNA binding proteins, this protein initially binds near the 5'-end of the 23S rRNA. It is important during the early stages of 50S assembly. It makes multiple contacts with different domains of the 23S rRNA in the assembled 50S subunit and ribosome. Functionally, forms part of the polypeptide exit tunnel. This is Large ribosomal subunit protein uL4 from Yersinia enterocolitica serotype O:8 / biotype 1B (strain NCTC 13174 / 8081).